The primary structure comprises 587 residues: Integrator complex subunit 14 (587 aa).

A VWFA domain is found at 3 to 113; sequence TLIALDASLS…NILQVVVFTD (111 aa). 2 disordered regions span residues 190 to 211 and 304 to 331; these read KSSD…KSEL and REKS…DTSN.

It belongs to the Integrator subunit 14 family. Belongs to the multiprotein complex Integrator, at least composed of IntS1, IntS2, IntS3, IntS4, omd/IntS5, IntS6, defl/IntS7, IntS8, IntS9, IntS10, IntS11, IntS12, asun/IntS13, IntS14 and IntS15. The core complex associates with protein phosphatase 2A subunits mts/PP2A and Pp2A-29B, to form the Integrator-PP2A (INTAC) complex.

The protein localises to the nucleus. Its function is as follows. Component of the integrator complex, a multiprotein complex that terminates RNA polymerase II (Pol II) transcription in the promoter-proximal region of genes. The integrator complex provides a quality checkpoint during transcription elongation by driving premature transcription termination of transcripts that are unfavorably configured for transcriptional elongation: the complex terminates transcription by (1) catalyzing dephosphorylation of the C-terminal domain (CTD) of Pol II subunit Polr2A/Rbp1 and Spt5, and (2) degrading the exiting nascent RNA transcript via endonuclease activity. The integrator complex is also involved in the 3'-end processing of the U7 snRNA, and also the spliceosomal snRNAs U1, U2, U4 and U5. This Drosophila melanogaster (Fruit fly) protein is Integrator complex subunit 14.